A 358-amino-acid polypeptide reads, in one-letter code: Alpha-2-HS-glycoprotein (358 aa).

An N-terminal signal peptide occupies residues 1–18; sequence MKFFVLFLCLVQLWGCHS. Residues 27-133 enclose the Cystatin fetuin-A-type 1 domain; it reads ERNPACDDPE…QFSVVFAKCE (107 aa). Cystine bridges form between C32-C349, C89-C100, C114-C132, C146-C149, C208-C218, and C229-C246. N-linked (GlcNAc...) asparagine glycosylation occurs at N99. The residue at position 134 (S134) is a Phosphoserine. T135 carries the phosphothreonine modification. Position 138 is a phosphoserine (S138). In terms of domain architecture, Cystatin fetuin-A-type 2 spans 144 to 254; that stretch reads KVCPQCPLLT…TCTVFPTQPV (111 aa). Residues N156 and N176 are each glycosylated (N-linked (GlcNAc...) asparagine). The interval 257–288 is disordered; it reads LPQPDAASSANPPPAADPAVSPPSSPSVPVDS. The segment covering 267-282 has biased composition (pro residues); that stretch reads NPPPAADPAVSPPSSP. A phosphoserine mark is found at S318 and S320. The disordered stretch occupies residues 320-350; sequence SGEAFGPRQKPKVTHPGVASGVGPVPPPPCP.

Belongs to the fetuin family. Post-translationally, phosphorylated by FAM20C in the extracellular medium. In terms of tissue distribution, bone marrow.

It is found in the secreted. The sequence is that of Alpha-2-HS-glycoprotein (AHSG) from Cavia porcellus (Guinea pig).